Reading from the N-terminus, the 393-residue chain is Cytotoxic and regulatory T-cell molecule (393 aa).

An N-terminal signal peptide occupies residues 1–17 (MWWRVLSLLAWFPLQEA). One can recognise an Ig-like V-type domain in the interval 18–114 (SLTNHTETIT…VSTKEVKVIV (97 aa)). At 18–287 (SLTNHTETIT…YLGLARKKSG (270 aa)) the chain is on the extracellular side. 3 N-linked (GlcNAc...) asparagine glycosylation sites follow: asparagine 21, asparagine 87, and asparagine 178. Cystine bridges form between cysteine 38–cysteine 98 and cysteine 141–cysteine 196. Positions 118–210 (PFKPILEASV…RGLQGRKLVA (93 aa)) constitute an Ig-like C2-type domain. Positions 225–273 (SDALERNSLSSQDPQQPTSTVSVTEDSSTSEIDKEEKEQTTQDPDLTTE) are disordered. Residues 231-241 (NSLSSQDPQQP) show a composition bias toward polar residues. A compositionally biased stretch (low complexity) spans 242–254 (TSTVSVTEDSSTS). Positions 255 to 264 (EIDKEEKEQT) are enriched in basic and acidic residues. A helical transmembrane segment spans residues 288 to 308 (ILLLTLVSFLIFILFIIVQLF). Residues 309 to 393 (IMKLRKAHVI…KHIQVPESIV (85 aa)) are Cytoplasmic-facing. Composition is skewed to basic and acidic residues over residues 328-348 (HTLE…EEKN) and 374-387 (ENVQ…KHIQ). Disordered regions lie at residues 328–354 (HTLE…SSHP) and 374–393 (ENVQ…ESIV). The PDZ-binding signature appears at 390–393 (ESIV).

This sequence belongs to the nectin family. In terms of assembly, monomer. May form homodimer (via Ig-like V-type domain). Interacts (via Ig-like V-type domain) with CADM1 (via Ig-like V-type domain); the interaction competes with CRTAM homodimerization and CADM1 homodimerization. Interacts (via PDZ-binding motif) with SCRIB (via PDZ domain 3); the interaction promotes CRTAM and SCRIB polarization in a subset of CD4+ T-cells. As to expression, in the immune system, expression is restricted to activated class-I MHC-restricted cells, including NKT and CD8 T-cells. Strongly expressed in spleen, thymus, small intestine, peripheral blood leukocyte, and in Purkinje neurons in cerebellum. Expressed at much lower levels in testis, ovary, colon, lung and lymphoid tissues.

It is found in the cell membrane. Functionally, mediates heterophilic cell-cell adhesion which regulates the activation, differentiation and tissue retention of various T-cell subsets. Interaction with CADM1 promotes natural killer (NK) cell cytotoxicity and IFNG/interferon-gamma secretion by CD8+ T-cells in vitro as well as NK cell-mediated rejection of tumors expressing CADM1 in vivo. Regulates CD8+ T-cell proliferation in response to T-cell receptor (TCR) activation. Appears to be dispensable for CD8+ T-cell-mediated cytotoxicity. Interaction with SCRIB promotes the late phase of cellular polarization of a subset of CD4+ T-cells, which in turn regulates TCR-mediated proliferation and IFNG, IL17 and IL22 production. By interacting with CADM1 on CD8+ dendritic cells, regulates the retention of activated CD8+ T-cells within the draining lymph node. Required for the intestinal retention of intraepithelial CD4+ CD8+ T-cells and, to a lesser extent, intraepithelial and lamina propria CD8+ T-cells and CD4+ T-cells. Interaction with CADM1 promotes the adhesion to gut-associated CD103+ dendritic cells, which may facilitate the expression of gut-homing and adhesion molecules on T-cells and the conversion of CD4+ T-cells into CD4+ CD8+ T-cells. This chain is Cytotoxic and regulatory T-cell molecule, found in Homo sapiens (Human).